Reading from the N-terminus, the 346-residue chain is Fructose-1,6-bisphosphatase class 1 (346 aa).

Mg(2+)-binding residues include Glu96, Asp119, Leu121, and Asp122. Substrate-binding positions include 122-125 (DGSS), Asn214, Tyr247, and Lys277. A Mg(2+)-binding site is contributed by Glu283.

It belongs to the FBPase class 1 family. In terms of assembly, homotetramer. Mg(2+) serves as cofactor.

Its subcellular location is the cytoplasm. The enzyme catalyses beta-D-fructose 1,6-bisphosphate + H2O = beta-D-fructose 6-phosphate + phosphate. The protein operates within carbohydrate biosynthesis; gluconeogenesis. The protein is Fructose-1,6-bisphosphatase class 1 of Cytophaga hutchinsonii (strain ATCC 33406 / DSM 1761 / CIP 103989 / NBRC 15051 / NCIMB 9469 / D465).